Here is a 634-residue protein sequence, read N- to C-terminus: Sodium-dependent neutral amino acid transporter B(0)AT1 (634 aa).

The Cytoplasmic segment spans residues 1-41 (MVRLVLPNPGLEDRIPSLDELEVIEKEEASSRPKWDNKAQY). Ser-17 bears the Phosphoserine mark. A helical membrane pass occupies residues 42–62 (MLTCVGFCVGLGNVWRFPYLC). Over 63-65 (QSH) the chain is Extracellular. A helical membrane pass occupies residues 66–86 (GGGAFMIPFLILLVLEGIPLL). The Cytoplasmic portion of the chain corresponds to 87–119 (HLEFAIGQRLRKGSVGVWSSIHPALKGVGIASM). Residues 120-140 (FVSFMVGLYYNTIIAWVMWYF) form a helical membrane-spanning segment. The Extracellular portion of the chain corresponds to 141–192 (FNSFQEPLPWSECPLNQNQTGYVEECAKSSSVDYFWYRETLNISTSISDSGS). 2 N-linked (GlcNAc...) asparagine glycosylation sites follow: Asn-158 and Asn-182. A helical membrane pass occupies residues 193 to 213 (IQWWILLCLTCAWSVLYVCTI). The Cytoplasmic portion of the chain corresponds to 214–221 (RGIETTGK). A helical membrane pass occupies residues 222 to 242 (AVYITSTLPYVVLTIFLIRGL). Over 243 to 268 (TLKGATNGIVFLFTPNITELSNPNTW) the chain is Extracellular. N-linked (GlcNAc...) asparagine glycosylation occurs at Asn-258. A helical membrane pass occupies residues 269-289 (LDAGAQVFYSFSLAFGGLISF). The Cytoplasmic portion of the chain corresponds to 290 to 304 (SSYNSVHNNCEMDSV). Residues 305-325 (IVSIINGFTSVYAATVVYSII) traverse the membrane as a helical segment. Residues 326–413 (GFRATERFDD…TEAITKMPVS (88 aa)) lie on the Extracellular side of the membrane. N-linked (GlcNAc...) asparagine glycosylation is found at Asn-354 and Asn-368. The chain crosses the membrane as a helical span at residues 414–434 (PLWSVLFFIMLFCLGLSSMFG). Topologically, residues 435–456 (NMEGVVVPLQDLNITPKKWPKE) are cytoplasmic. Residues 457–477 (LLTGLICLGTYLIAFIFTLNS) traverse the membrane as a helical segment. Over 478-490 (GQYWLSLLDSYAG) the chain is Extracellular. A helical membrane pass occupies residues 491–511 (SIPLLIIAFCEMFAVVYVYGV). Residues 512–531 (DRFNKDIEFMIGHKPNIFWQ) are Cytoplasmic-facing. A helical transmembrane segment spans residues 532–552 (VTWRVVSPLIMLVIFLFFFVI). Residues 553–581 (EVNKQLMYSVWDPDYEEFPKSQKVPYPDW) lie on the Extracellular side of the membrane. Residues 582–602 (VYAVVVIVAGVPCLTIPCFAI) form a helical membrane-spanning segment. Topologically, residues 603-634 (YKLIRNYCQKSGDQHGLVNALSTASVNGDLKN) are cytoplasmic. The residue at position 627 (Ser-627) is a Phosphoserine.

The protein belongs to the sodium:neurotransmitter symporter (SNF) (TC 2.A.22) family. SLC6A19 subfamily. Interacts in a tissue-specific manner with ACE2 in small intestine and with CLTRN in the kidney. Interacts with CLTRN; this interaction is required for trafficking of SLC6A19 to the plasma membrane and for its catalytic activation in kidneys. Interacts with ACE2; this interaction is required for trafficking of SLC6A19 to the plasma membrane and for its catalytic activation in intestine. Interacts with ANPEP; the interaction positively regulates its amino acid transporter activity.

Its subcellular location is the membrane. It carries out the reaction L-alanine(in) + Na(+)(in) = L-alanine(out) + Na(+)(out). The catalysed reaction is L-cysteine(in) + Na(+)(in) = L-cysteine(out) + Na(+)(out). It catalyses the reaction L-glutamine(in) + Na(+)(in) = L-glutamine(out) + Na(+)(out). The enzyme catalyses glycine(in) + Na(+)(in) = glycine(out) + Na(+)(out). It carries out the reaction L-isoleucine(in) + Na(+)(in) = L-isoleucine(out) + Na(+)(out). The catalysed reaction is L-leucine(in) + Na(+)(in) = L-leucine(out) + Na(+)(out). It catalyses the reaction L-methionine(in) + Na(+)(in) = L-methionine(out) + Na(+)(out). The enzyme catalyses L-phenylalanine(in) + Na(+)(in) = L-phenylalanine(out) + Na(+)(out). It carries out the reaction L-serine(in) + Na(+)(in) = L-serine(out) + Na(+)(out). The catalysed reaction is L-tryptophan(in) + Na(+)(in) = L-tryptophan(out) + Na(+)(out). It catalyses the reaction L-tyrosine(in) + Na(+)(in) = L-tyrosine(out) + Na(+)(out). The enzyme catalyses L-valine(in) + Na(+)(in) = L-valine(out) + Na(+)(out). Transporter that mediates resorption of neutral amino acids across the apical membrane of renal and intestinal epithelial cells. This uptake is sodium-dependent and chloride-independent. Requires CLTRN in kidney or ACE2 in intestine for cell surface expression and amino acid transporter activity. The polypeptide is Sodium-dependent neutral amino acid transporter B(0)AT1 (Rattus norvegicus (Rat)).